The chain runs to 270 residues: Type III pantothenate kinase (270 aa).

6–13 contributes to the ATP binding site; the sequence is DVRNTHTV. Substrate is bound at residue 109 to 112; sequence GADR. The active-site Proton acceptor is Asp111. A K(+)-binding site is contributed by Asp131. Residue Ser134 coordinates ATP. Residue Thr186 coordinates substrate.

The protein belongs to the type III pantothenate kinase family. As to quaternary structure, homodimer. Requires NH4(+) as cofactor. The cofactor is K(+).

The protein localises to the cytoplasm. The enzyme catalyses (R)-pantothenate + ATP = (R)-4'-phosphopantothenate + ADP + H(+). The protein operates within cofactor biosynthesis; coenzyme A biosynthesis; CoA from (R)-pantothenate: step 1/5. In terms of biological role, catalyzes the phosphorylation of pantothenate (Pan), the first step in CoA biosynthesis. The sequence is that of Type III pantothenate kinase from Mycolicibacterium gilvum (strain PYR-GCK) (Mycobacterium gilvum (strain PYR-GCK)).